The following is a 101-amino-acid chain: Cyanovirin-N (101 aa).

2 disulfide bridges follow: Cys8/Cys22 and Cys58/Cys73.

The protein belongs to the cyanovirin-N family. In terms of assembly, in solution exists as a metastable domain-swapped homodimer which very slowly converts into a more stable monomeric form at room temperature. Under physiological conditions it is unlikely that the dimeric species exists and indeed the monomer is more active against HIV. Interacts with HIV-1 gp120. Post-translationally, cleavage, or reduction and alkylation of the disulfide bonds results in the loss of anti-HIV activity.

Functionally, mannose-binding lectin. This is Cyanovirin-N from Nostoc ellipsosporum.